The primary structure comprises 118 residues: Cysteine--tRNA ligase (118 aa).

Position 28 (cysteine 28) interacts with Zn(2+). The short motif at 30–40 (PTVYNYIHIGN) is the 'HIGH' region element.

This sequence belongs to the class-I aminoacyl-tRNA synthetase family. Monomer. Zn(2+) is required as a cofactor.

It is found in the cytoplasm. The catalysed reaction is tRNA(Cys) + L-cysteine + ATP = L-cysteinyl-tRNA(Cys) + AMP + diphosphate. The polypeptide is Cysteine--tRNA ligase (cysS) (Staphylococcus xylosus).